The sequence spans 101 residues: uncharacterized protein (101 aa).

An N-terminal signal peptide occupies residues Met-1 to Ala-19. Residue Cys-20 is the site of N-palmitoyl cysteine attachment. Cys-20 is lipidated: S-diacylglycerol cysteine.

The protein belongs to the MG439/MG440 family.

It localises to the cell membrane. This is an uncharacterized protein from Mycoplasma pneumoniae (strain ATCC 29342 / M129 / Subtype 1) (Mycoplasmoides pneumoniae).